A 353-amino-acid polypeptide reads, in one-letter code: Terpene synthase 1 (353 aa).

The short motif at Asp81 to Ala86 is the DDxx(x)D/E motif element. An NDxxSxxxD/E motif motif is present at residues Asn222–Glu230.

Belongs to the terpene synthase family.

It catalyses the reaction (2E,6E)-farnesyl diphosphate = (2S,3R,6S,9S)-(-)-protoillud-7-ene + diphosphate. In terms of biological role, terpene synthase that converts its substrate farnesyl diphosphate (FPP) into the sesquiterpene protoillud-7-ene. The sequence is that of Terpene synthase 1 from Tieghemostelium lacteum (Slime mold).